The following is a 159-amino-acid chain: Ribosomal RNA large subunit methyltransferase H (159 aa).

Residues L76, G108, and 127-132 (FSKMTF) contribute to the S-adenosyl-L-methionine site.

Belongs to the RNA methyltransferase RlmH family. In terms of assembly, homodimer.

The protein localises to the cytoplasm. The enzyme catalyses pseudouridine(1915) in 23S rRNA + S-adenosyl-L-methionine = N(3)-methylpseudouridine(1915) in 23S rRNA + S-adenosyl-L-homocysteine + H(+). In terms of biological role, specifically methylates the pseudouridine at position 1915 (m3Psi1915) in 23S rRNA. The chain is Ribosomal RNA large subunit methyltransferase H from Shouchella clausii (strain KSM-K16) (Alkalihalobacillus clausii).